A 311-amino-acid chain; its full sequence is Probable manganese-dependent inorganic pyrophosphatase (311 aa).

Mn(2+) contacts are provided by histidine 9, aspartate 13, aspartate 15, aspartate 77, histidine 99, and aspartate 151.

This sequence belongs to the PPase class C family. Mn(2+) is required as a cofactor.

The protein localises to the cytoplasm. The catalysed reaction is diphosphate + H2O = 2 phosphate + H(+). The chain is Probable manganese-dependent inorganic pyrophosphatase from Streptococcus agalactiae serotype Ia (strain ATCC 27591 / A909 / CDC SS700).